The following is a 452-amino-acid chain: FAD transporter (452 aa).

12 helical membrane-spanning segments follow: residues 21–41 (LPNLIGIMTILGFSLADTFFI), 49–69 (LAAISFTFPVTLIISSIAIGV), 96–116 (ALLLTFILIASLSALGSIFIE), 131–151 (LIHDYMMYWYVGAPLLVLLMV), 167–187 (MIMTLAAIINLILDPLLIFGI), 199–219 (AIATLFSWLVALSLSGYLLII), 248–270 (AALMNLINPLANAVIMAMLAHID), 283–303 (LESVLLIVVMALSSSLMPFIA), 324–344 (FILVFQTLLYIPLAFFAQPLA), 357–377 (LSFYILVLPCAYGPLGIVIIF), 392–412 (VINLCRLVLLMLPLAALGSYI), and 417–437 (GLLLALPITNLLMGIACYYLA).

It belongs to the multi antimicrobial extrusion (MATE) (TC 2.A.66.1) family.

It localises to the cell inner membrane. Functionally, flavin adenine dinucleotide (FAD) transporter that facilitates export of flavin electron shuttles. The protein is FAD transporter of Shewanella oneidensis (strain ATCC 700550 / JCM 31522 / CIP 106686 / LMG 19005 / NCIMB 14063 / MR-1).